The following is a 756-amino-acid chain: Serine/threonine-protein kinase tousled-like 1-B (756 aa).

Low complexity-rich tracts occupy residues 1-12 (MSVQSNSNSSGS) and 23-34 (STGSPTPGSVSP). Disordered regions lie at residues 1–56 (MSVQ…LDPR) and 69–185 (VSGN…QNSS). Over residues 45–56 (EGMDELHSLDPR) the composition is skewed to basic and acidic residues. The segment covering 72–85 (NTGGSTGSASGGPK) has biased composition (gly residues). Positions 93–103 (SSHSFGSLGSS) are enriched in low complexity. The span at 104 to 120 (SDKESETPEKKHFESSR) shows a compositional bias: basic and acidic residues. Positions 243–268 (DLRRQIDEQQKLLERFKERLNKCTTM) form a coiled coil. Residues 339 to 375 (KLLAKRKPSSTPSSQSPTPNESKQRKTKAVNGADNDP) are disordered. Low complexity predominate over residues 347 to 357 (SSTPSSQSPTP). The stretch at 397-435 (FKLRLGHLKKEEAEIQAELERLERVRNLHIRELKRINNE) forms a coiled coil. Positions 450 to 728 (YLLLHLLGRG…VHQLGSDSYL (279 aa)) constitute a Protein kinase domain. Residues 456–464 (LGRGGFSEV) and Lys-479 each bind ATP. Asp-580 functions as the Proton acceptor in the catalytic mechanism. The disordered stretch occupies residues 734–756 (RSNSSGNLQATPASPAPSGIISY). Over residues 735-745 (SNSSGNLQATP) the composition is skewed to polar residues.

The protein belongs to the protein kinase superfamily. Ser/Thr protein kinase family. Mg(2+) is required as a cofactor.

The protein resides in the nucleus. It carries out the reaction L-seryl-[protein] + ATP = O-phospho-L-seryl-[protein] + ADP + H(+). The enzyme catalyses L-threonyl-[protein] + ATP = O-phospho-L-threonyl-[protein] + ADP + H(+). This is Serine/threonine-protein kinase tousled-like 1-B (tlk1b) from Danio rerio (Zebrafish).